A 1010-amino-acid chain; its full sequence is Protein CROWDED NUCLEI 4 (1010 aa).

Coiled-coil stretches lie at residues 82-350 (LLLL…LIQN) and 404-763 (EKEH…NLER). 2 consecutive short sequence motifs (nuclear localization signal) follow at residues 445–452 (NRKTTMLE) and 679–686 (LKRLDAER). Disordered stretches follow at residues 787 to 813 (GVSTVSNSEDGYNSSMERQNGLTPSSA), 839 to 937 (HYEE…TQTP), and 966 to 994 (DCSESPSEAGRKMGEETEDGDCNQTGINA). Over residues 849–863 (EKLKLESSRREEKAY) the composition is skewed to basic and acidic residues. Composition is skewed to polar residues over residues 883-893 (NTSGDETSEPS) and 912-921 (TQSVISSPQN).

It belongs to the CRWN family. Core component of the LINC complex which is composed of inner nuclear membrane SUN domain-containing proteins coupled to outer nuclear membrane WIP proteins, the nucleoskeletal CRWN/LINC proteins, and, possibly, KAKU4. Binds to KAKU4. As to expression, expressed at low levels in roots, leaves, flowers and flower stalks.

It is found in the nucleus membrane. The protein resides in the nucleus. The protein localises to the nucleoplasm. Its subcellular location is the nucleus lamina. It localises to the cytoplasm. Functionally, component of SUN-protein-containing multivariate complexes also called LINC complexes which link the nucleoskeleton and cytoskeleton by providing versatile outer nuclear membrane attachment sites for cytoskeletal filaments. Required for nucleus structure organization (e.g. size and shape). Involved in the maintenance of interphase chromocenter integrity and organization. The polypeptide is Protein CROWDED NUCLEI 4 (Arabidopsis thaliana (Mouse-ear cress)).